A 152-amino-acid polypeptide reads, in one-letter code: Transcriptional repressor NrdR (152 aa).

The disordered stretch occupies residues 1–21 (MRCPFCGNGDTQVKDSRPTED). The segment at 3–34 (CPFCGNGDTQVKDSRPTEDSAAIRRRRFCPAC) is a zinc-finger region. Residues 12–21 (QVKDSRPTED) are compositionally biased toward basic and acidic residues. Residues 49–139 (LVIVKKDGQR…VYRNFREAKD (91 aa)) enclose the ATP-cone domain.

Belongs to the NrdR family. It depends on Zn(2+) as a cofactor.

Functionally, negatively regulates transcription of bacterial ribonucleotide reductase nrd genes and operons by binding to NrdR-boxes. This is Transcriptional repressor NrdR from Rhodospirillum rubrum (strain ATCC 11170 / ATH 1.1.1 / DSM 467 / LMG 4362 / NCIMB 8255 / S1).